Here is a 527-residue protein sequence, read N- to C-terminus: Eukaryotic translation initiation factor 3 subunit D (527 aa).

The tract at residues 100 to 136 (QQNKRGGSNAGGRGGRGGMRGGRFGSNNKYWNDRRQR) is disordered. The segment covering 107–123 (SNAGGRGGRGGMRGGRF) has biased composition (gly residues). The segment at 264–277 (SEHLTVNENLTAHH) is RNA gate. Residues 503–527 (DQIEEETQEEEEEEQSKGWVEESRE) are disordered. Acidic residues predominate over residues 504–516 (QIEEETQEEEEEE). The span at 517 to 527 (QSKGWVEESRE) shows a compositional bias: basic and acidic residues.

It belongs to the eIF-3 subunit D family. As to quaternary structure, component of the eukaryotic translation initiation factor 3 (eIF-3) complex.

It is found in the cytoplasm. In terms of biological role, mRNA cap-binding component of the eukaryotic translation initiation factor 3 (eIF-3) complex, which is involved in protein synthesis of a specialized repertoire of mRNAs and, together with other initiation factors, stimulates binding of mRNA and methionyl-tRNAi to the 40S ribosome. The eIF-3 complex specifically targets and initiates translation of a subset of mRNAs involved in cell proliferation. In the eIF-3 complex, eif3d specifically recognizes and binds the 7-methylguanosine cap of a subset of mRNAs. The protein is Eukaryotic translation initiation factor 3 subunit D (eif3d) of Dictyostelium discoideum (Social amoeba).